A 691-amino-acid chain; its full sequence is Probable E3 ubiquitin-protein ligase RHG1A (691 aa).

5 disordered regions span residues Ser71–Arg91, Gly151–Met235, Ser316–Thr336, Val349–Ile373, and Gln395–Arg501. Residues Thr80–Arg91 show a composition bias toward basic and acidic residues. Polar residues-rich tracts occupy residues Gly204–Ser213 and Phe317–Val328. The span at Arg361–Ser370 shows a compositional bias: basic and acidic residues. A compositionally biased stretch (polar residues) spans Gln395 to Asn406. The span at Ser407 to Ser419 shows a compositional bias: low complexity. A compositionally biased stretch (polar residues) spans Asn429 to His440. The span at Arg454 to Thr465 shows a compositional bias: low complexity. Residues Cys637–Lys678 form an RING-type; atypical zinc finger.

Expressed in stems, flowers, green siliques, cauline leaves, seeds and roots.

The enzyme catalyses S-ubiquitinyl-[E2 ubiquitin-conjugating enzyme]-L-cysteine + [acceptor protein]-L-lysine = [E2 ubiquitin-conjugating enzyme]-L-cysteine + N(6)-ubiquitinyl-[acceptor protein]-L-lysine.. Its pathway is protein modification; protein ubiquitination. Its function is as follows. Probable E3 ubiquitin-protein ligase that may possess E3 ubiquitin ligase activity in vitro. This Arabidopsis thaliana (Mouse-ear cress) protein is Probable E3 ubiquitin-protein ligase RHG1A.